Reading from the N-terminus, the 555-residue chain is Adenine deaminase (555 aa).

Belongs to the metallo-dependent hydrolases superfamily. Adenine deaminase family. Requires Mn(2+) as cofactor.

It carries out the reaction adenine + H2O + H(+) = hypoxanthine + NH4(+). The polypeptide is Adenine deaminase (Methanosarcina mazei (strain ATCC BAA-159 / DSM 3647 / Goe1 / Go1 / JCM 11833 / OCM 88) (Methanosarcina frisia)).